A 209-amino-acid polypeptide reads, in one-letter code: Orotate phosphoribosyltransferase (209 aa).

Residues R96, K100, H102, and 122–130 (EDLISTGGS) contribute to the 5-phospho-alpha-D-ribose 1-diphosphate site. Residue S126 participates in orotate binding.

Belongs to the purine/pyrimidine phosphoribosyltransferase family. PyrE subfamily. Homodimer. It depends on Mg(2+) as a cofactor.

The enzyme catalyses orotidine 5'-phosphate + diphosphate = orotate + 5-phospho-alpha-D-ribose 1-diphosphate. The protein operates within pyrimidine metabolism; UMP biosynthesis via de novo pathway; UMP from orotate: step 1/2. Functionally, catalyzes the transfer of a ribosyl phosphate group from 5-phosphoribose 1-diphosphate to orotate, leading to the formation of orotidine monophosphate (OMP). In Streptococcus gordonii (strain Challis / ATCC 35105 / BCRC 15272 / CH1 / DL1 / V288), this protein is Orotate phosphoribosyltransferase.